The primary structure comprises 298 residues: uncharacterized protein (298 aa).

This is an uncharacterized protein from Orgyia pseudotsugata multicapsid polyhedrosis virus (OpMNPV).